The sequence spans 709 residues: Acyl-coenzyme A oxidase 4 (709 aa).

Residues 1-12 (MTFTKKNVSVSQ) show a composition bias toward polar residues. The disordered stretch occupies residues 1–29 (MTFTKKNVSVSQGPDPRSSIQKERDSSKW).

The protein belongs to the acyl-CoA oxidase family. In terms of assembly, homooctamer. The cofactor is FAD.

It is found in the peroxisome. It carries out the reaction a 2,3-saturated acyl-CoA + O2 = a (2E)-enoyl-CoA + H2O2. It functions in the pathway lipid metabolism; peroxisomal fatty acid beta-oxidation. This chain is Acyl-coenzyme A oxidase 4 (POX4), found in Candida tropicalis (Yeast).